The sequence spans 430 residues: Adenylosuccinate synthetase (430 aa).

Residues 12-18 (GDEGKGK) and 40-42 (GHT) contribute to the GTP site. Catalysis depends on aspartate 13, which acts as the Proton acceptor. Aspartate 13 and glycine 40 together coordinate Mg(2+). Residues 13 to 16 (DEGK), 38 to 41 (NAGH), threonine 128, arginine 142, glutamine 223, threonine 238, and arginine 302 contribute to the IMP site. Histidine 41 acts as the Proton donor in catalysis. Position 298-304 (298-304 (TTTGRPR)) interacts with substrate. Residues arginine 304, 330-332 (SID), and 412-414 (SVG) each bind GTP.

The protein belongs to the adenylosuccinate synthetase family. As to quaternary structure, homodimer. It depends on Mg(2+) as a cofactor.

It is found in the cytoplasm. The catalysed reaction is IMP + L-aspartate + GTP = N(6)-(1,2-dicarboxyethyl)-AMP + GDP + phosphate + 2 H(+). Its pathway is purine metabolism; AMP biosynthesis via de novo pathway; AMP from IMP: step 1/2. In terms of biological role, plays an important role in the de novo pathway of purine nucleotide biosynthesis. Catalyzes the first committed step in the biosynthesis of AMP from IMP. The protein is Adenylosuccinate synthetase of Bacillus licheniformis (strain ATCC 14580 / DSM 13 / JCM 2505 / CCUG 7422 / NBRC 12200 / NCIMB 9375 / NCTC 10341 / NRRL NRS-1264 / Gibson 46).